Here is a 75-residue protein sequence, read N- to C-terminus: Alpha-elapitoxin-Bc2b (75 aa).

An N-terminal signal peptide occupies residues 1–2; that stretch reads YT. 5 disulfides stabilise this stretch: C5-C24, C17-C45, C30-C34, C49-C60, and C61-C66.

Monomer in solution, homodimer in crystal state. Expressed by the venom gland.

The protein localises to the secreted. Its function is as follows. Binds to muscular and neuronal nicotinic acetylcholine receptor (nAChR) and inhibits acetylcholine from binding to the receptor, thereby impairing neuromuscular and neuronal transmission. Blocks muscle type nAChR. Also binds with high affinity to alpha-7/CHRNA7 nAChRs. In addition, shows a weak inhibition of neuronal alpha-3-beta-2/CHRNA3-CHRNB2 nAChR. Selectively binds to alpha-1-delta subunit interface of the mouse muscle nicotinic acetylcholine receptor, with a 10-fold higher affinity for the adult than for the fetal receptors. In vivo, when intraperitoneally injected into mice, causes flaccid paralysis and respiratory distress, followed by death within 2-4 hours. This is Alpha-elapitoxin-Bc2b from Bungarus candidus (Malayan krait).